We begin with the raw amino-acid sequence, 418 residues long: Actin-related protein 3B (418 aa).

This sequence belongs to the actin family. ARP3 subfamily. In terms of assembly, interacts with the Arp2/3 complex composed of ARP2, ARP3, ARPC1B, ARPC1B/p41-ARC, ARPC2/p34-ARC, ARPC3/p21-ARC, ARPC4/p20-ARC and ARPC5/p16-ARC. As to expression, detected in fetal brain. Detected throughout the adult brain, in neurons from gray matter, but not in white matter. Detected in liver, skeletal muscle and pancreas. Detected in lung adenocarcinoma cells with low metastatic potential, but not in lung adenocarcinoma cells with high metastatic potential.

It is found in the cytoplasm. The protein localises to the cytoskeleton. Its subcellular location is the cell projection. In terms of biological role, plays a role in the organization of the actin cytoskeleton. May function as ATP-binding component of the Arp2/3 complex which is involved in regulation of actin polymerization and together with an activating nucleation-promoting factor (NPF) mediates the formation of branched actin networks. May decrease the metastatic potential of tumors. This is Actin-related protein 3B (ACTR3B) from Homo sapiens (Human).